Consider the following 218-residue polypeptide: Thyroid hormone receptor alpha (218 aa).

One can recognise an NR LBD domain in the interval 1 to 215 (PEDIGQSPGV…PPLFLEVFED (215 aa)). Arg-36 and Ser-85 together coordinate 3,3',5-triiodo-L-thyronine.

It belongs to the nuclear hormone receptor family. NR1 subfamily.

It localises to the nucleus. Functionally, nuclear hormone receptor that can act as a repressor or activator of transcription. High affinity receptor for thyroid hormones, including triiodothyronine and thyroxine. The protein is Thyroid hormone receptor alpha (thra) of Oncorhynchus mykiss (Rainbow trout).